Consider the following 313-residue polypeptide: Beta-lactamase (313 aa).

The N-terminal stretch at Met-1–Val-15 is a signal peptide. Ser-190 (acyl-ester intermediate) is an active-site residue.

The protein belongs to the class-C beta-lactamase family.

The enzyme catalyses a beta-lactam + H2O = a substituted beta-amino acid. In terms of biological role, upon expression in E.coli enables the latter to utilize penicillin as a carbon source. This chain is Beta-lactamase (penA), found in Burkholderia multivorans (strain ATCC 17616 / 249).